The chain runs to 484 residues: tRNA sulfurtransferase (484 aa).

Residues 63–167 (REMIERLTCT…LDRLFVIHRQ (105 aa)) form the THUMP domain. Residues 185 to 186 (LM), Lys-267, Gly-289, and Gln-298 contribute to the ATP site. Cysteines 346 and 457 form a disulfide. Residues 405-483 (VLPGQIVIDI…GHTNVRVYRP (79 aa)) form the Rhodanese domain. Cys-457 functions as the Cysteine persulfide intermediate in the catalytic mechanism.

The protein belongs to the ThiI family.

Its subcellular location is the cytoplasm. It carries out the reaction [ThiI sulfur-carrier protein]-S-sulfanyl-L-cysteine + a uridine in tRNA + 2 reduced [2Fe-2S]-[ferredoxin] + ATP + H(+) = [ThiI sulfur-carrier protein]-L-cysteine + a 4-thiouridine in tRNA + 2 oxidized [2Fe-2S]-[ferredoxin] + AMP + diphosphate. It catalyses the reaction [ThiS sulfur-carrier protein]-C-terminal Gly-Gly-AMP + S-sulfanyl-L-cysteinyl-[cysteine desulfurase] + AH2 = [ThiS sulfur-carrier protein]-C-terminal-Gly-aminoethanethioate + L-cysteinyl-[cysteine desulfurase] + A + AMP + 2 H(+). The protein operates within cofactor biosynthesis; thiamine diphosphate biosynthesis. Catalyzes the ATP-dependent transfer of a sulfur to tRNA to produce 4-thiouridine in position 8 of tRNAs, which functions as a near-UV photosensor. Also catalyzes the transfer of sulfur to the sulfur carrier protein ThiS, forming ThiS-thiocarboxylate. This is a step in the synthesis of thiazole, in the thiamine biosynthesis pathway. The sulfur is donated as persulfide by IscS. The polypeptide is tRNA sulfurtransferase (Pseudomonas aeruginosa (strain UCBPP-PA14)).